Consider the following 427-residue polypeptide: Serine--tRNA ligase (427 aa).

231–233 is a binding site for L-serine; the sequence is TAE. Residue 262–264 participates in ATP binding; that stretch reads RSE. L-serine is bound at residue E285. Residue 349–352 participates in ATP binding; the sequence is EISS. S385 lines the L-serine pocket.

This sequence belongs to the class-II aminoacyl-tRNA synthetase family. Type-1 seryl-tRNA synthetase subfamily. As to quaternary structure, homodimer. The tRNA molecule binds across the dimer.

Its subcellular location is the cytoplasm. The enzyme catalyses tRNA(Ser) + L-serine + ATP = L-seryl-tRNA(Ser) + AMP + diphosphate + H(+). It carries out the reaction tRNA(Sec) + L-serine + ATP = L-seryl-tRNA(Sec) + AMP + diphosphate + H(+). The protein operates within aminoacyl-tRNA biosynthesis; selenocysteinyl-tRNA(Sec) biosynthesis; L-seryl-tRNA(Sec) from L-serine and tRNA(Sec): step 1/1. Functionally, catalyzes the attachment of serine to tRNA(Ser). Is also able to aminoacylate tRNA(Sec) with serine, to form the misacylated tRNA L-seryl-tRNA(Sec), which will be further converted into selenocysteinyl-tRNA(Sec). The sequence is that of Serine--tRNA ligase from Allorhizobium ampelinum (strain ATCC BAA-846 / DSM 112012 / S4) (Agrobacterium vitis (strain S4)).